The following is an 838-amino-acid chain: Probable bifunctional folylpolyglutamate synthase/dihydropteroate synthase (838 aa).

The tract at residues 1–418 (MEYHEAVNFL…LVVGSLYVVA (418 aa)) is folylpolyglutamate synthase. 46–52 (GSNGKGS) contributes to the ATP binding site. Positions 541–561 (AADAGEDDERGAGDASDAGHD) are disordered. One can recognise a Pterin-binding domain in the interval 569 to 819 (TAVMGILNVT…DVPENVAAVN (251 aa)). Residues 571–838 (VMGILNVTPN…RFEADAERED (268 aa)) form a DHPS region. Asn-576 is a binding site for Mg(2+). Residues Thr-616, Asp-649, Asn-668, Asp-738, Lys-774, and 807 to 809 (RVH) each bind (7,8-dihydropterin-6-yl)methyl diphosphate.

It in the N-terminal section; belongs to the folylpolyglutamate synthase family. The protein in the C-terminal section; belongs to the DHPS family. Mg(2+) serves as cofactor.

It catalyses the reaction (6S)-5,6,7,8-tetrahydrofolyl-(gamma-L-Glu)(n) + L-glutamate + ATP = (6S)-5,6,7,8-tetrahydrofolyl-(gamma-L-Glu)(n+1) + ADP + phosphate + H(+). The catalysed reaction is (7,8-dihydropterin-6-yl)methyl diphosphate + 4-aminobenzoate = 7,8-dihydropteroate + diphosphate. It participates in cofactor biosynthesis; tetrahydrofolylpolyglutamate biosynthesis. The protein operates within cofactor biosynthesis; tetrahydrofolate biosynthesis; 7,8-dihydrofolate from 2-amino-4-hydroxy-6-hydroxymethyl-7,8-dihydropteridine diphosphate and 4-aminobenzoate: step 1/2. Functionally, can complement an H.volcanii mutant strain that is thymidine auxotroph because it lacks the two dihydrofolate reductase genes encoded by hdrA and hdrB. This is Probable bifunctional folylpolyglutamate synthase/dihydropteroate synthase (folCP) from Haloferax volcanii (strain ATCC 29605 / DSM 3757 / JCM 8879 / NBRC 14742 / NCIMB 2012 / VKM B-1768 / DS2) (Halobacterium volcanii).